A 252-amino-acid polypeptide reads, in one-letter code: Glucosamine-6-phosphate deaminase (252 aa).

D67 (proton acceptor; for enolization step) is an active-site residue. The active-site For ring-opening step is the N137. Residue H139 is the Proton acceptor; for ring-opening step of the active site. E144 acts as the For ring-opening step in catalysis.

This sequence belongs to the glucosamine/galactosamine-6-phosphate isomerase family. NagB subfamily.

The enzyme catalyses alpha-D-glucosamine 6-phosphate + H2O = beta-D-fructose 6-phosphate + NH4(+). The protein operates within amino-sugar metabolism; N-acetylneuraminate degradation; D-fructose 6-phosphate from N-acetylneuraminate: step 5/5. In terms of biological role, catalyzes the reversible isomerization-deamination of glucosamine 6-phosphate (GlcN6P) to form fructose 6-phosphate (Fru6P) and ammonium ion. In Staphylococcus aureus (strain bovine RF122 / ET3-1), this protein is Glucosamine-6-phosphate deaminase.